The primary structure comprises 196 residues: Molybdenum cofactor guanylyltransferase (196 aa).

GTP contacts are provided by residues 10–12 (LAG), Lys-23, Asn-51, Asp-69, and Asp-99. Asp-99 contributes to the Mg(2+) binding site.

This sequence belongs to the MobA family. Monomer. Mg(2+) is required as a cofactor.

It localises to the cytoplasm. It carries out the reaction Mo-molybdopterin + GTP + H(+) = Mo-molybdopterin guanine dinucleotide + diphosphate. In terms of biological role, transfers a GMP moiety from GTP to Mo-molybdopterin (Mo-MPT) cofactor (Moco or molybdenum cofactor) to form Mo-molybdopterin guanine dinucleotide (Mo-MGD) cofactor. This Shewanella sp. (strain W3-18-1) protein is Molybdenum cofactor guanylyltransferase.